The following is a 284-amino-acid chain: Phospholipid phosphatase 1 (284 aa).

At 1–6 the chain is on the cytoplasmic side; it reads MFDKTR. Positions 5–7 match the PDZ-binding; involved in localization to the apical cell membrane motif; sequence TRL. The chain crosses the membrane as a helical span at residues 7-27; sequence LPYVALDVLCVLLAGLPFAIL. Residues 28–53 are Extracellular-facing; sequence TSRHTPFQRGVFCNDESIKYPYKEDT. Residues 54–74 traverse the membrane as a helical segment; the sequence is IPYALLGGIIIPFSIIVIILG. The Cytoplasmic portion of the chain corresponds to 75–94; sequence ETLSVYCNLLHSNSFIRNNY. Residues 95-115 traverse the membrane as a helical segment; it reads IATIYKAIGTFLFGAAASQSL. Over 116–164 the chain is Extracellular; the sequence is TDIAKYSIGRLRPHFLDVCDPDWSKINCSDGYIEYYICRGNAERVKEGR. Positions 120 to 128 are phosphatase sequence motif I; the sequence is KYSIGRLRP. N142 carries N-linked (GlcNAc...) asparagine glycosylation. Residues 165–185 traverse the membrane as a helical segment; it reads LSFYSGHSSFSMYCMLFVALY. Residues 168–171 form a phosphatase sequence motif II region; that stretch reads YSGH. Residue H171 is the Proton donors of the active site. Over 186–199 the chain is Cytoplasmic; sequence LQARMKGDWARLLR. Residues 200–220 traverse the membrane as a helical segment; it reads PTLQFGLVAVSIYVGLSRVSD. The interval 216–227 is phosphatase sequence motif III; the sequence is SRVSDYKHHWSD. The Extracellular portion of the chain corresponds to 221–229; that stretch reads YKHHWSDVL. The Nucleophile role is filled by H223. Residues 230–250 traverse the membrane as a helical segment; that stretch reads TGLIQGALVAILVAVYVSDFF. Residues 251–284 lie on the Cytoplasmic side of the membrane; that stretch reads KERTSFKERKEEDSHTTLHETPTTGNHYPSNHQP. Residues 260-284 form a disordered region; it reads KEEDSHTTLHETPTTGNHYPSNHQP. The segment covering 269-284 has biased composition (polar residues); the sequence is HETPTTGNHYPSNHQP.

Belongs to the PA-phosphatase related phosphoesterase family. As to quaternary structure, forms functional homodimers and homooligomers that are not required for substrate recognition and catalytic activity. Can also form heterooligomers with PLPP2 and PLPP3. N-glycosylated. N-linked sugars are of the complex type. N-glycosylation is not required for the phosphatase activity. In terms of tissue distribution, widely expressed with highest expression found in prostate. Found to be down-regulated in colon adenocarcinomas. As to expression, predominant in kidney, lung, placenta and liver. Predominant in heart and pancreas.

The protein resides in the cell membrane. It is found in the apical cell membrane. It localises to the membrane raft. Its subcellular location is the membrane. The protein localises to the caveola. It catalyses the reaction a 1,2-diacyl-sn-glycero-3-phosphate + H2O = a 1,2-diacyl-sn-glycerol + phosphate. The catalysed reaction is 1,2-dihexadecanoyl-sn-glycero-3-phosphate + H2O = 1,2-dihexadecanoyl-sn-glycerol + phosphate. The enzyme catalyses 1,2-di-(9Z-octadecenoyl)-sn-glycero-3-phosphate + H2O = 1,2-di-(9Z-octadecenoyl)-sn-glycerol + phosphate. It carries out the reaction a monoacyl-sn-glycero-3-phosphate + H2O = a monoacylglycerol + phosphate. It catalyses the reaction (9Z)-octadecenoyl-sn-glycero-3-phosphate + H2O = (9Z-octadecenoyl)-glycerol + phosphate. The catalysed reaction is a 1-acyl-sn-glycero-3-phosphate + H2O = a 1-acyl-sn-glycerol + phosphate. The enzyme catalyses 1-(9Z-octadecenoyl)-sn-glycero-3-phosphate + H2O = 1-(9Z-octadecenoyl)-sn-glycerol + phosphate. It carries out the reaction a 1,2-diacyl-sn-glycerol 3-diphosphate + H2O = a 1,2-diacyl-sn-glycero-3-phosphate + phosphate + H(+). It catalyses the reaction sphing-4-enine 1-phosphate + H2O = sphing-4-enine + phosphate. The catalysed reaction is an N-acylsphing-4-enine 1-phosphate + H2O = an N-acylsphing-4-enine + phosphate. The enzyme catalyses N-(octanoyl)-sphing-4-enine-1-phosphate + H2O = N-octanoylsphing-4-enine + phosphate. It carries out the reaction N-(9Z-octadecenoyl)-ethanolamine phosphate + H2O = N-(9Z-octadecenoyl) ethanolamine + phosphate. It catalyses the reaction 1-hexadecanoyl-2-(9Z-octadecenoyl)-sn-glycero-3-phosphate + H2O = 1-hexadecanoyl-2-(9Z-octadecenoyl)-sn-glycerol + phosphate. Its pathway is lipid metabolism; phospholipid metabolism. With respect to regulation, magnesium-independent phospholipid phosphatase. Insensitive to N-ethylmaleimide. Inhibited by sphingosine, zinc ions and modestly by propanolol. Inhibited by vanadate. Magnesium-independent phospholipid phosphatase of the plasma membrane that catalyzes the dephosphorylation of a variety of glycerolipid and sphingolipid phosphate esters including phosphatidate/PA, lysophosphatidate/LPA, diacylglycerol pyrophosphate/DGPP, sphingosine 1-phosphate/S1P and ceramide 1-phosphate/C1P. Also acts on N-oleoyl ethanolamine phosphate/N-(9Z-octadecenoyl)-ethanolamine phosphate, a potential physiological compound. Through its extracellular phosphatase activity allows both the hydrolysis and the cellular uptake of these bioactive lipid mediators from the milieu, regulating signal transduction in different cellular processes. It is for instance essential for the extracellular hydrolysis of S1P and subsequent conversion into intracellular S1P. Involved in the regulation of inflammation, platelets activation, cell proliferation and migration among other processes. May also have an intracellular activity to regulate phospholipid-mediated signaling pathways. This chain is Phospholipid phosphatase 1, found in Homo sapiens (Human).